A 105-amino-acid polypeptide reads, in one-letter code: Large ribosomal subunit protein bL21 (105 aa).

It belongs to the bacterial ribosomal protein bL21 family. As to quaternary structure, part of the 50S ribosomal subunit. Contacts protein L20.

In terms of biological role, this protein binds to 23S rRNA in the presence of protein L20. In Porphyromonas gingivalis (strain ATCC BAA-308 / W83), this protein is Large ribosomal subunit protein bL21.